Here is a 338-residue protein sequence, read N- to C-terminus: S-adenosylmethionine:tRNA ribosyltransferase-isomerase (338 aa).

It belongs to the QueA family. Monomer.

It localises to the cytoplasm. The catalysed reaction is 7-aminomethyl-7-carbaguanosine(34) in tRNA + S-adenosyl-L-methionine = epoxyqueuosine(34) in tRNA + adenine + L-methionine + 2 H(+). Its pathway is tRNA modification; tRNA-queuosine biosynthesis. Its function is as follows. Transfers and isomerizes the ribose moiety from AdoMet to the 7-aminomethyl group of 7-deazaguanine (preQ1-tRNA) to give epoxyqueuosine (oQ-tRNA). The polypeptide is S-adenosylmethionine:tRNA ribosyltransferase-isomerase (Carboxydothermus hydrogenoformans (strain ATCC BAA-161 / DSM 6008 / Z-2901)).